Consider the following 467-residue polypeptide: Glutamate--tRNA ligase (467 aa).

Residues 9 to 19 (PSPTGYLHIGG) carry the 'HIGH' region motif. The 'KMSKS' region motif lies at 237–241 (KLSKR). Lys-240 contributes to the ATP binding site.

Belongs to the class-I aminoacyl-tRNA synthetase family. Glutamate--tRNA ligase type 1 subfamily. In terms of assembly, monomer.

The protein localises to the cytoplasm. The catalysed reaction is tRNA(Glu) + L-glutamate + ATP = L-glutamyl-tRNA(Glu) + AMP + diphosphate. Its function is as follows. Catalyzes the attachment of glutamate to tRNA(Glu) in a two-step reaction: glutamate is first activated by ATP to form Glu-AMP and then transferred to the acceptor end of tRNA(Glu). The sequence is that of Glutamate--tRNA ligase from Stenotrophomonas maltophilia (strain R551-3).